The sequence spans 172 residues: Small ribosomal subunit protein uS5 (172 aa).

The S5 DRBM domain maps to 17-80 (LREKMIAVNR…EEARRNMVKV (64 aa)).

It belongs to the universal ribosomal protein uS5 family. As to quaternary structure, part of the 30S ribosomal subunit. Contacts proteins S4 and S8.

Functionally, with S4 and S12 plays an important role in translational accuracy. Its function is as follows. Located at the back of the 30S subunit body where it stabilizes the conformation of the head with respect to the body. In Verminephrobacter eiseniae (strain EF01-2), this protein is Small ribosomal subunit protein uS5.